The chain runs to 332 residues: Glycerol-3-phosphate dehydrogenase [NAD(P)+] (332 aa).

Positions 11, 30, and 108 each coordinate NADPH. Lys108, Gly137, and Ser139 together coordinate sn-glycerol 3-phosphate. Ala141 contacts NADPH. 5 residues coordinate sn-glycerol 3-phosphate: Lys192, Asp245, Ser255, Arg256, and Asn257. Residue Lys192 is the Proton acceptor of the active site. Residue Arg256 coordinates NADPH. The NADPH site is built by Val280 and Glu282.

It belongs to the NAD-dependent glycerol-3-phosphate dehydrogenase family.

Its subcellular location is the cytoplasm. The catalysed reaction is sn-glycerol 3-phosphate + NAD(+) = dihydroxyacetone phosphate + NADH + H(+). It catalyses the reaction sn-glycerol 3-phosphate + NADP(+) = dihydroxyacetone phosphate + NADPH + H(+). It functions in the pathway membrane lipid metabolism; glycerophospholipid metabolism. In terms of biological role, catalyzes the reduction of the glycolytic intermediate dihydroxyacetone phosphate (DHAP) to sn-glycerol 3-phosphate (G3P), the key precursor for phospholipid synthesis. This chain is Glycerol-3-phosphate dehydrogenase [NAD(P)+], found in Burkholderia lata (strain ATCC 17760 / DSM 23089 / LMG 22485 / NCIMB 9086 / R18194 / 383).